The chain runs to 228 residues: uncharacterized protein (228 aa).

The next 5 membrane-spanning stretches (helical) occupy residues 14–34 (HTISILLGYLLMGMTFGMLLV), 42–62 (VALFMSLFIYAGAVQFVAITL), 130–150 (FIFSISLLNHSYWIFGSLVGS), 156–176 (FSFDTQGMEFVMTAIFIVLFM), and 192–212 (IVIAVVCLALFGTEYFLLIAL).

It belongs to the AzlC family.

The protein localises to the cell membrane. This is an uncharacterized protein from Helicobacter pylori (strain ATCC 700392 / 26695) (Campylobacter pylori).